A 752-amino-acid chain; its full sequence is Multifunctional tryptophan biosynthesis protein (752 aa).

One can recognise a Glutamine amidotransferase type-1 domain in the interval 23-223 (NVILIDNYDS…LELTAGTWDN (201 aa)). Position 74–76 (74–76 (GPG)) interacts with L-glutamine. Residue Cys102 is the Nucleophile; for GATase activity of the active site. L-glutamine is bound by residues Gln106 and 152–153 (SL). Residues His197 and Glu199 each act as for GATase activity in the active site. The indole-3-glycerol phosphate synthase stretch occupies residues 239-503 (ILDKIYAHRK…DTSAFVAQLL (265 aa)). Residues 519–752 (LVKICGTRTE…FVKSAKSIRQ (234 aa)) form an N-(5'-phosphoribosyl)anthranilate isomerase region.

It catalyses the reaction N-(5-phospho-beta-D-ribosyl)anthranilate = 1-(2-carboxyphenylamino)-1-deoxy-D-ribulose 5-phosphate. The catalysed reaction is 1-(2-carboxyphenylamino)-1-deoxy-D-ribulose 5-phosphate + H(+) = (1S,2R)-1-C-(indol-3-yl)glycerol 3-phosphate + CO2 + H2O. It carries out the reaction chorismate + L-glutamine = anthranilate + pyruvate + L-glutamate + H(+). It participates in amino-acid biosynthesis; L-tryptophan biosynthesis; L-tryptophan from chorismate: step 1/5. The protein operates within amino-acid biosynthesis; L-tryptophan biosynthesis; L-tryptophan from chorismate: step 3/5. Its pathway is amino-acid biosynthesis; L-tryptophan biosynthesis; L-tryptophan from chorismate: step 4/5. Its function is as follows. Trifunctional enzyme bearing the Gln amidotransferase (GATase) domain of anthranilate synthase, indole-glycerolphosphate synthase, and phosphoribosylanthranilate isomerase activities. This chain is Multifunctional tryptophan biosynthesis protein (trpC), found in Penicillium chrysogenum (Penicillium notatum).